Here is a 138-residue protein sequence, read N- to C-terminus: Acidic phospholipase A2 5 (138 aa).

Residues 1–16 form the signal peptide; sequence MRTLWIVAVWLIGVEG. Disulfide bonds link C42–C131, C44–C60, C59–C111, C65–C138, C66–C104, C73–C97, and C91–C102. Residues Y43, G45, and G47 each coordinate Ca(2+). H63 is a catalytic residue. D64 serves as a coordination point for Ca(2+). The active site involves D105.

It belongs to the phospholipase A2 family. Group II subfamily. D49 sub-subfamily. Requires Ca(2+) as cofactor. In terms of tissue distribution, expressed by the venom gland.

Its subcellular location is the secreted. It catalyses the reaction a 1,2-diacyl-sn-glycero-3-phosphocholine + H2O = a 1-acyl-sn-glycero-3-phosphocholine + a fatty acid + H(+). Its function is as follows. PLA2 catalyzes the calcium-dependent hydrolysis of the 2-acyl groups in 3-sn-phosphoglycerides. This chain is Acidic phospholipase A2 5, found in Echis ocellatus (Ocellated saw-scaled viper).